We begin with the raw amino-acid sequence, 468 residues long: 6-phospho-beta-galactosidase (468 aa).

Positions 19, 116, 159, 160, and 297 each coordinate D-galactose 6-phosphate. Glu-160 acts as the Proton donor in catalysis. Glu-375 acts as the Nucleophile in catalysis. Ser-428, Trp-429, Lys-435, and Tyr-437 together coordinate D-galactose 6-phosphate.

The protein belongs to the glycosyl hydrolase 1 family.

It catalyses the reaction a 6-phospho-beta-D-galactoside + H2O = D-galactose 6-phosphate + an alcohol. Its pathway is carbohydrate metabolism; lactose degradation; D-galactose 6-phosphate and beta-D-glucose from lactose 6-phosphate: step 1/1. The sequence is that of 6-phospho-beta-galactosidase from Streptococcus pyogenes serotype M1.